We begin with the raw amino-acid sequence, 361 residues long: Chorismate synthase (361 aa).

Arg-48 and Arg-54 together coordinate NADP(+). FMN-binding positions include 125–127, 238–239, Gly-278, 293–297, and Arg-319; these read RSS, NA, and KPTSS.

This sequence belongs to the chorismate synthase family. Homotetramer. FMNH2 serves as cofactor.

It carries out the reaction 5-O-(1-carboxyvinyl)-3-phosphoshikimate = chorismate + phosphate. Its pathway is metabolic intermediate biosynthesis; chorismate biosynthesis; chorismate from D-erythrose 4-phosphate and phosphoenolpyruvate: step 7/7. Its function is as follows. Catalyzes the anti-1,4-elimination of the C-3 phosphate and the C-6 proR hydrogen from 5-enolpyruvylshikimate-3-phosphate (EPSP) to yield chorismate, which is the branch point compound that serves as the starting substrate for the three terminal pathways of aromatic amino acid biosynthesis. This reaction introduces a second double bond into the aromatic ring system. The sequence is that of Chorismate synthase from Salmonella paratyphi A (strain ATCC 9150 / SARB42).